A 91-amino-acid polypeptide reads, in one-letter code: Small ribosomal subunit protein uS19 (91 aa).

The protein belongs to the universal ribosomal protein uS19 family.

Protein S19 forms a complex with S13 that binds strongly to the 16S ribosomal RNA. In Pseudomonas syringae pv. syringae (strain B728a), this protein is Small ribosomal subunit protein uS19.